A 235-amino-acid chain; its full sequence is Probable septum site-determining protein MinC (235 aa).

Positions 104-125 (KAVRPAPVEPATPSEPPQNANP) are disordered. The span at 110–119 (PVEPATPSEP) shows a compositional bias: pro residues.

This sequence belongs to the MinC family. In terms of assembly, interacts with MinD and FtsZ.

Cell division inhibitor that blocks the formation of polar Z ring septums. Rapidly oscillates between the poles of the cell to destabilize FtsZ filaments that have formed before they mature into polar Z rings. Prevents FtsZ polymerization. The sequence is that of Probable septum site-determining protein MinC from Salmonella agona (strain SL483).